The following is a 500-amino-acid chain: Glycerol kinase (500 aa).

Thr13 is an ADP binding site. 3 residues coordinate ATP: Thr13, Thr14, and Ser15. Thr13 provides a ligand contact to sn-glycerol 3-phosphate. Arg17 is a binding site for ADP. Sn-glycerol 3-phosphate contacts are provided by Arg83, Glu84, Tyr135, and Asp244. The glycerol site is built by Arg83, Glu84, Tyr135, Asp244, and Gln245. 2 residues coordinate ADP: Thr266 and Gly309. ATP contacts are provided by Thr266, Gly309, Gln313, and Gly410. Residues Gly410 and Asn414 each contribute to the ADP site.

The protein belongs to the FGGY kinase family.

It catalyses the reaction glycerol + ATP = sn-glycerol 3-phosphate + ADP + H(+). The protein operates within polyol metabolism; glycerol degradation via glycerol kinase pathway; sn-glycerol 3-phosphate from glycerol: step 1/1. With respect to regulation, inhibited by fructose 1,6-bisphosphate (FBP). In terms of biological role, key enzyme in the regulation of glycerol uptake and metabolism. Catalyzes the phosphorylation of glycerol to yield sn-glycerol 3-phosphate. The chain is Glycerol kinase from Burkholderia pseudomallei (strain K96243).